The chain runs to 201 residues: Adenylyl-sulfate kinase (201 aa).

35 to 42 is an ATP binding site; it reads GLSGSGKS. The Phosphoserine intermediate role is filled by Ser-109.

It belongs to the APS kinase family.

It catalyses the reaction adenosine 5'-phosphosulfate + ATP = 3'-phosphoadenylyl sulfate + ADP + H(+). It functions in the pathway sulfur metabolism; hydrogen sulfide biosynthesis; sulfite from sulfate: step 2/3. Its function is as follows. Catalyzes the synthesis of activated sulfate. This chain is Adenylyl-sulfate kinase, found in Erwinia tasmaniensis (strain DSM 17950 / CFBP 7177 / CIP 109463 / NCPPB 4357 / Et1/99).